Here is a 571-residue protein sequence, read N- to C-terminus: Protein tesmin/TSO1-like CXC 6 (571 aa).

5 disordered regions span residues 1–52, 92–119, 293–325, 370–411, and 507–571; these read MGEG…AAAS, IRHP…QKKK, NQGT…GGNA, LANQ…RSLS, and NGVS…KKDL. Residues 7 to 16 are compositionally biased toward basic and acidic residues; it reads GDKFPPKTDE. One can recognise a CRC domain in the interval 117–241; that stretch reads KKKQCNCKHS…KCLDCKNFEG (125 aa). Composition is skewed to polar residues over residues 293 to 319, 373 to 388, and 508 to 539; these read NQGT…QTGS, QKET…QGHV, and GVSQ…QTAK. Residues 540-557 are compositionally biased toward low complexity; the sequence is QPSQLTTTTTTPNTSSQT.

The protein belongs to the lin-54 family. As to expression, ubiquitous but expressed mostly in flowers.

It localises to the nucleus. In terms of biological role, plays a role in development of both male and female reproductive tissues. This is Protein tesmin/TSO1-like CXC 6 (TCX6) from Arabidopsis thaliana (Mouse-ear cress).